The primary structure comprises 63 residues: Ferredoxin (63 aa).

The 4Fe-4S ferredoxin-type domain maps to 3 to 31 (WKVSVDVDTCIGDAICASLCPDVFEMGDD). Residues Cys-12, Asp-15, and Cys-18 each contribute to the [4Fe-4S] cluster site. Cys-22 and Cys-45 are joined by a disulfide. A [4Fe-4S] cluster-binding site is contributed by Cys-53.

[4Fe-4S] cluster is required as a cofactor. It depends on [3Fe-4S] cluster as a cofactor.

Its function is as follows. Ferredoxins are iron-sulfur proteins that transfer electrons in a wide variety of metabolic reactions. This Thermococcus kodakarensis (strain ATCC BAA-918 / JCM 12380 / KOD1) (Pyrococcus kodakaraensis (strain KOD1)) protein is Ferredoxin (fdxA).